The primary structure comprises 445 residues: Probable cytosol aminopeptidase (445 aa).

K217 and D222 together coordinate Mn(2+). The active site involves K229. The Mn(2+) site is built by D240, D299, and E301. R303 is a catalytic residue.

It belongs to the peptidase M17 family. Mn(2+) serves as cofactor.

Its subcellular location is the cytoplasm. The enzyme catalyses Release of an N-terminal amino acid, Xaa-|-Yaa-, in which Xaa is preferably Leu, but may be other amino acids including Pro although not Arg or Lys, and Yaa may be Pro. Amino acid amides and methyl esters are also readily hydrolyzed, but rates on arylamides are exceedingly low.. It carries out the reaction Release of an N-terminal amino acid, preferentially leucine, but not glutamic or aspartic acids.. Its function is as follows. Presumably involved in the processing and regular turnover of intracellular proteins. Catalyzes the removal of unsubstituted N-terminal amino acids from various peptides. This is Probable cytosol aminopeptidase (pepA) from Mycoplasma pneumoniae (strain ATCC 29342 / M129 / Subtype 1) (Mycoplasmoides pneumoniae).